We begin with the raw amino-acid sequence, 194 residues long: Peptidyl-tRNA hydrolase (194 aa).

Tyrosine 21 contacts tRNA. The Proton acceptor role is filled by histidine 26. TRNA contacts are provided by tyrosine 72, asparagine 74, and asparagine 120.

Belongs to the PTH family. In terms of assembly, monomer.

It is found in the cytoplasm. It catalyses the reaction an N-acyl-L-alpha-aminoacyl-tRNA + H2O = an N-acyl-L-amino acid + a tRNA + H(+). Functionally, hydrolyzes ribosome-free peptidyl-tRNAs (with 1 or more amino acids incorporated), which drop off the ribosome during protein synthesis, or as a result of ribosome stalling. In terms of biological role, catalyzes the release of premature peptidyl moieties from peptidyl-tRNA molecules trapped in stalled 50S ribosomal subunits, and thus maintains levels of free tRNAs and 50S ribosomes. The chain is Peptidyl-tRNA hydrolase from Halorhodospira halophila (strain DSM 244 / SL1) (Ectothiorhodospira halophila (strain DSM 244 / SL1)).